The sequence spans 289 residues: uncharacterized protein (289 aa).

The span at 80 to 96 (PLNESRTSFKNIPQSRN) shows a compositional bias: polar residues. 2 disordered regions span residues 80 to 101 (PLNESRTSFKNIPQSRNLPRDY) and 136 to 157 (PRENFRNDTDIPKDPLRDRMRE).

This is an uncharacterized protein from Acanthamoeba polyphaga (Amoeba).